A 129-amino-acid chain; its full sequence is Small ribosomal subunit protein uS11 (129 aa).

Belongs to the universal ribosomal protein uS11 family. Part of the 30S ribosomal subunit. Interacts with proteins S7 and S18. Binds to IF-3.

In terms of biological role, located on the platform of the 30S subunit, it bridges several disparate RNA helices of the 16S rRNA. Forms part of the Shine-Dalgarno cleft in the 70S ribosome. This chain is Small ribosomal subunit protein uS11, found in Glaesserella parasuis serovar 5 (strain SH0165) (Haemophilus parasuis).